Reading from the N-terminus, the 397-residue chain is Phosphoglycerate kinase (397 aa).

Substrate contacts are provided by residues 19–21 (DFN), arginine 35, 58–61 (HLGR), arginine 117, and arginine 150. ATP-binding positions include lysine 201, glutamate 323, and 349–352 (GGDS).

The protein belongs to the phosphoglycerate kinase family. Monomer.

The protein resides in the cytoplasm. The enzyme catalyses (2R)-3-phosphoglycerate + ATP = (2R)-3-phospho-glyceroyl phosphate + ADP. Its pathway is carbohydrate degradation; glycolysis; pyruvate from D-glyceraldehyde 3-phosphate: step 2/5. This chain is Phosphoglycerate kinase, found in Syntrophobacter fumaroxidans (strain DSM 10017 / MPOB).